We begin with the raw amino-acid sequence, 262 residues long: F-actin-capping protein subunit alpha (262 aa).

The protein belongs to the F-actin-capping protein alpha subunit family. Heterodimer of an alpha and a beta subunit.

Its function is as follows. F-actin-capping proteins bind in a Ca(2+)-independent manner to the fast growing ends of actin filaments (barbed end) thereby blocking the exchange of subunits at these ends. Unlike other capping proteins (such as gelsolin and severin), these proteins do not sever actin filaments. The chain is F-actin-capping protein subunit alpha (CAP1) from Kluyveromyces lactis (strain ATCC 8585 / CBS 2359 / DSM 70799 / NBRC 1267 / NRRL Y-1140 / WM37) (Yeast).